A 229-amino-acid chain; its full sequence is Cytochrome c oxidase subunit 2 (229 aa).

Over 1–26 (MSTWANLGLQDSASPLMEQLIFFHDH) the chain is Mitochondrial intermembrane. A helical membrane pass occupies residues 27 to 48 (ALLILVMITILVGYLMFMLFFN). Residues 49–62 (SYINRFLLHGQLIE) are Mitochondrial matrix-facing. A helical membrane pass occupies residues 63–82 (MIWTILPAIILLFIAMPSLR). Topologically, residues 83-229 (LLYLLDEINE…IKWIASKVNS (147 aa)) are mitochondrial intermembrane. Histidine 161, cysteine 196, glutamate 198, cysteine 200, histidine 204, and methionine 207 together coordinate Cu cation. Residue glutamate 198 participates in Mg(2+) binding.

The protein belongs to the cytochrome c oxidase subunit 2 family. As to quaternary structure, component of the cytochrome c oxidase (complex IV, CIV), a multisubunit enzyme composed of a catalytic core of 3 subunits and several supernumerary subunits. The complex exists as a monomer or a dimer and forms supercomplexes (SCs) in the inner mitochondrial membrane with ubiquinol-cytochrome c oxidoreductase (cytochrome b-c1 complex, complex III, CIII). Cu cation serves as cofactor.

The protein localises to the mitochondrion inner membrane. It carries out the reaction 4 Fe(II)-[cytochrome c] + O2 + 8 H(+)(in) = 4 Fe(III)-[cytochrome c] + 2 H2O + 4 H(+)(out). Functionally, component of the cytochrome c oxidase, the last enzyme in the mitochondrial electron transport chain which drives oxidative phosphorylation. The respiratory chain contains 3 multisubunit complexes succinate dehydrogenase (complex II, CII), ubiquinol-cytochrome c oxidoreductase (cytochrome b-c1 complex, complex III, CIII) and cytochrome c oxidase (complex IV, CIV), that cooperate to transfer electrons derived from NADH and succinate to molecular oxygen, creating an electrochemical gradient over the inner membrane that drives transmembrane transport and the ATP synthase. Cytochrome c oxidase is the component of the respiratory chain that catalyzes the reduction of oxygen to water. Electrons originating from reduced cytochrome c in the intermembrane space (IMS) are transferred via the dinuclear copper A center (CU(A)) of subunit 2 and heme A of subunit 1 to the active site in subunit 1, a binuclear center (BNC) formed by heme A3 and copper B (CU(B)). The BNC reduces molecular oxygen to 2 water molecules using 4 electrons from cytochrome c in the IMS and 4 protons from the mitochondrial matrix. This Drosophila bifasciata (Fruit fly) protein is Cytochrome c oxidase subunit 2 (mt:CoII).